The following is a 309-amino-acid chain: Cyclin-dependent kinase B1-1 (309 aa).

The region spanning 4-301 (YEKLEKVGEG…AKTALDHPYF (298 aa)) is the Protein kinase domain. ATP contacts are provided by residues 10-18 (VGEGTYGKV) and Lys-33. The residue at position 15 (Tyr-15) is a Phosphotyrosine. Asp-142 serves as the catalytic Proton acceptor. Thr-176 bears the Phosphothreonine; by CAK mark.

It belongs to the protein kinase superfamily. CMGC Ser/Thr protein kinase family. CDC2/CDKX subfamily. Interacts with CKS1. Interacts with CYCU3-1. Interacts with SIM, SMR1 and SMR2. Highly expressed in guard cells and stomatal precursor cells of cotyledons. Expressed in roots, stems, flowers and siliques.

The protein resides in the nucleus. It catalyses the reaction L-seryl-[protein] + ATP = O-phospho-L-seryl-[protein] + ADP + H(+). The enzyme catalyses L-threonyl-[protein] + ATP = O-phospho-L-threonyl-[protein] + ADP + H(+). The catalysed reaction is [DNA-directed RNA polymerase] + ATP = phospho-[DNA-directed RNA polymerase] + ADP + H(+). Its activity is regulated as follows. Phosphorylation at Thr-14 or Tyr-15 inactivates the enzyme, while phosphorylation at Thr-176 activates it. May control G2/M (mitosis) phase progression. Plays a role in regulating seedling growth in darkness via regulation of hypocotyl cell elongation and cotyledon cell development. Plays a role in stomatal development. Required to suppress endoreduplication. Together with CDKB1-2, promotes both the last division in the stomatal cell lineage as well as the number of stomata. In collaboration with MYB124 and MYB88, restrict the G1/S transition and chloroplast and nuclear number during stomatal formation, and normally maintain fate and developmental progression throughout the stomatal cell lineage. The chain is Cyclin-dependent kinase B1-1 (CDKB1-1) from Arabidopsis thaliana (Mouse-ear cress).